A 294-amino-acid polypeptide reads, in one-letter code: Single-stranded nucleic acid-binding protein (294 aa).

Residues 1–30 form a disordered region; the sequence is MSAEIEEATNAVNNLSINDSEQQPRAPTHK. N-acetylserine is present on S2. Phosphoserine occurs at positions 2 and 16. Polar residues predominate over residues 10–25; that stretch reads NAVNNLSINDSEQQPR. An RRM 1 domain is found at 37 to 119; that stretch reads DTIFIGNVAH…REIHIKRART (83 aa). Position 49 is a phosphothreonine (T49). S66 is modified (phosphoserine). Phosphothreonine occurs at positions 91 and 119. At R125 the chain carries Omega-N-methylarginine. The segment at 131-151 is RNA-binding RGG-box; sequence RGGFRGRGGFRGGFRGGYRGG. A dimethylated arginine mark is found at R135, R137, and R141. Residue R145 is modified to Dimethylated arginine; alternate. R145 carries the omega-N-methylarginine; alternate modification. R149 bears the Omega-N-methylarginine mark. A compositionally biased stretch (gly residues) spans 151–169; the sequence is GFRGRGNFRGRGGARGGFN. The segment at 151–171 is disordered; it reads GFRGRGNFRGRGGARGGFNGQ. Residues R153, R155, and R159 each carry the dimethylated arginine modification. R161 and R165 each carry dimethylated arginine; alternate. An omega-N-methylarginine; alternate mark is found at R161 and R165. The 89-residue stretch at 186–274 folds into the RRM 2 domain; it reads DTLYINNVPF…RELTVDVAVI (89 aa). T242 bears the Phosphothreonine mark. S244 is modified (phosphoserine). Positions 275 to 294 are disordered; the sequence is RPENDEEEIEQETGSEEKQE. Acidic residues predominate over residues 278-288; the sequence is NDEEEIEQETG. T287 is subject to Phosphothreonine. S289 carries the post-translational modification Phosphoserine.

It belongs to the RRM GAR family. In terms of assembly, associated with snR10 and snR11 small nuclear RNAs.

It localises to the cytoplasm. Its subcellular location is the nucleus. The protein localises to the nucleolus. The protein resides in the P-body. It is found in the stress granule. Its function is as follows. Functions in the transition of mRNAs from translation to an mRNP complex destined for decapping. High-copy-number suppressor of decapping defects. Overexpression suppresses decapping defects in both DCP1-2 and DCP2-7 mutations. Acts to promote translational repression of mRNA in conjunction with DHH1 and subsequent mRNA localization to P bodies. Promotes translational repression of mRNA during glucose deprivation. In Saccharomyces cerevisiae (strain ATCC 204508 / S288c) (Baker's yeast), this protein is Single-stranded nucleic acid-binding protein (SBP1).